The chain runs to 225 residues: PKHD-type hydroxylase YbiX (225 aa).

Residues 78–177 (TLSTPLFNRY…RVASFMWIQS (100 aa)) enclose the Fe2OG dioxygenase domain. His-96, Asp-98, and His-158 together coordinate Fe cation. Arg-168 contributes to the 2-oxoglutarate binding site.

Fe(2+) is required as a cofactor. Requires L-ascorbate as cofactor.

This Shigella boydii serotype 4 (strain Sb227) protein is PKHD-type hydroxylase YbiX.